A 116-amino-acid polypeptide reads, in one-letter code: NADH dehydrogenase [ubiquinone] 1 alpha subcomplex subunit 5 (116 aa).

A2 bears the N-acetylalanine mark. K30, K36, K46, and K60 each carry N6-acetyllysine. S89 carries the phosphoserine modification. Residue K98 is modified to N6-acetyllysine; alternate. K98 is subject to N6-succinyllysine; alternate.

Belongs to the complex I NDUFA5 subunit family. As to quaternary structure, complex I is composed of 45 different subunits. In terms of processing, acetylation of Lys-98 is observed in liver mitochondria from fasted mice but not from fed mice.

It localises to the mitochondrion inner membrane. Functionally, accessory subunit of the mitochondrial membrane respiratory chain NADH dehydrogenase (Complex I), that is believed not to be involved in catalysis. Complex I functions in the transfer of electrons from NADH to the respiratory chain. The immediate electron acceptor for the enzyme is believed to be ubiquinone. This Mus musculus (Mouse) protein is NADH dehydrogenase [ubiquinone] 1 alpha subcomplex subunit 5 (Ndufa5).